The following is a 332-amino-acid chain: Chorismate synthase (332 aa).

Arg-46 is an NADP(+) binding site. Residues His-123–Ser-125, Gly-253, Lys-268–Ser-272, and Arg-295 each bind FMN.

Belongs to the chorismate synthase family. As to quaternary structure, homotetramer. It depends on FMNH2 as a cofactor.

The catalysed reaction is 5-O-(1-carboxyvinyl)-3-phosphoshikimate = chorismate + phosphate. It functions in the pathway metabolic intermediate biosynthesis; chorismate biosynthesis; chorismate from D-erythrose 4-phosphate and phosphoenolpyruvate: step 7/7. Functionally, catalyzes the anti-1,4-elimination of the C-3 phosphate and the C-6 proR hydrogen from 5-enolpyruvylshikimate-3-phosphate (EPSP) to yield chorismate, which is the branch point compound that serves as the starting substrate for the three terminal pathways of aromatic amino acid biosynthesis. This reaction introduces a second double bond into the aromatic ring system. In Chitinophaga pinensis (strain ATCC 43595 / DSM 2588 / LMG 13176 / NBRC 15968 / NCIMB 11800 / UQM 2034), this protein is Chorismate synthase.